Here is a 492-residue protein sequence, read N- to C-terminus: Cell death protein 6 (492 aa).

A compositionally biased stretch (low complexity) spans 19–29; it reads GNNINGEGSSS. A disordered region spans residues 19-38; that stretch reads GNNINGEGSSSPSTSAPQVK. Residues 55-215 enclose the PID domain; that stretch reads INGHVEYVAR…YILKKKIVEL (161 aa). Disordered stretches follow at residues 241–385 and 464–492; these read TGPP…STAA and TGDL…NLKQ. A compositionally biased stretch (pro residues) spans 244–268; it reads PIYPGLGPPALPLSPMPQGPPPNIP. The segment covering 300-312 has biased composition (low complexity); the sequence is ASPSVSPASTSPS. Pro residues predominate over residues 313-333; sequence GPAPSIPPPRPPALAPPPPVA. Over residues 373–383 the composition is skewed to basic and acidic residues; sequence FDPRAGEKKST.

It belongs to the ced-6 family. As to quaternary structure, homodimer. Interacts with ced-1. Interacts with E3 ubiquitin-protein ligase trim-21. As to expression, detected in gonadal sheath cells.

It localises to the cytoplasm. In terms of biological role, may function as an adapter protein in a pathway that mediates recognition and phagocytosis of apoptotic cells during normal development. Promotes engulfment of cells at both early and late stages of apoptosis. Required for actin reorganization around apoptotic cells. Plays a role in protecting dopaminergic neurons from oxidative stress-induced degeneration. Mediates recruitment of E3 ubiquitin-protein ligase trim-21 to the apoptotic cell surface which promotes ubiquitination and degradation of ced-1. This chain is Cell death protein 6, found in Caenorhabditis elegans.